Reading from the N-terminus, the 373-residue chain is Outer membrane protein assembly factor BamC (373 aa).

Positions 1–16 (MLKQVTPLVLIAAVTA) are cleaved as a signal peptide. C17 carries N-palmitoyl cysteine lipidation. C17 carries the S-diacylglycerol cysteine lipid modification.

It belongs to the BamC family. Part of the Bam complex.

It localises to the cell outer membrane. In terms of biological role, part of the outer membrane protein assembly complex, which is involved in assembly and insertion of beta-barrel proteins into the outer membrane. The sequence is that of Outer membrane protein assembly factor BamC from Shewanella sediminis (strain HAW-EB3).